We begin with the raw amino-acid sequence, 562 residues long: MNINVADLLIGNHILLLFVVLALGLCLGKLRLGSVQLGNSIGVLVVSLLLGQQHFSINTDALNLGFMLFIFCVGVEAGPNFFSIFFRDGKNYLMLAIVMVSSAMVLALGLGKLFGWDIGLTAGMLAGSMTSTPVLVGAGDTLRQTLTDGKSLSLAQDHLSLGYALTYLVGLVSLIFGARYLPKLQHQDLPTSAQQIARERGLDPDSKRKVYLPVIRAYRVGPELVAWSDGKNLRELGIYRQTGCYIERIRRNGILASPDGDAVLQPGDEISLVGYPDAHARLDPSFRNGKEVFDRDLLDMRIVNEEIVVKNNNAVNRRLSQLKLTDHGCFLNRVIRSQIEMPIDESIILNKGDVLHISGEARRVKSVADRIGFISIHSQVTDLLAFCAFFILGLMIGMITFQFSNFNFGIGNAAGLLFAGIMLGFLRANHPTFGYIPQGALTMVKEFGLMVFMAGVGLSAGSGITKGLGETGLLMLGAGLIVSLVPVVICFLFGAWVLKMNRALLFGAIMGARTCAPAMEIISDTARSNIPALGYAGTYAIANVLLTLAGTLIVIIWPILGG.

5 helical membrane-spanning segments follow: residues 8-28 (LLIG…LCLG), 32-52 (LGSV…LLGQ), 66-86 (FMLF…SIFF), 94-114 (MLAI…GKLF), and 158-178 (HLSL…IFGA). 2 RCK C-terminal domains span residues 202–288 (LDPD…SFRN) and 290–373 (KEVF…RIGF). The next 6 helical transmembrane spans lie at 383-403 (LLAF…TFQF), 406-426 (FNFG…LGFL), 440-460 (ALTM…GLSA), 473-493 (LLML…CFLF), 503-523 (ALLF…EIIS), and 540-560 (AIAN…WPIL).

It belongs to the AAE transporter (TC 2.A.81) family. YbjL subfamily.

Its subcellular location is the cell membrane. This is Putative transport protein ETA_21820 from Erwinia tasmaniensis (strain DSM 17950 / CFBP 7177 / CIP 109463 / NCPPB 4357 / Et1/99).